A 210-amino-acid polypeptide reads, in one-letter code: 3-hexulose-6-phosphate synthase (210 aa).

This sequence belongs to the HPS/KGPDC family. HPS subfamily.

The enzyme catalyses D-ribulose 5-phosphate + formaldehyde = D-arabino-hex-3-ulose 6-phosphate. It functions in the pathway one-carbon metabolism; formaldehyde assimilation via RuMP pathway; D-fructose 6-phosphate from D-ribulose 5-phosphate and formaldehyde: step 1/2. Catalyzes the condensation of ribulose 5-phosphate with formaldehyde to form 3-hexulose 6-phosphate. This is 3-hexulose-6-phosphate synthase from Staphylococcus aureus (strain bovine RF122 / ET3-1).